Here is a 61-residue protein sequence, read N- to C-terminus: MDPNCSCSTGGSCTCTSSCACKNCKCTSCKKSCCSCCPVGCSKCAQGCVCKGAADKCTCCA.

The residue at position 1 (Met1) is an N-acetylmethionine. Residues 1–29 (MDPNCSCSTGGSCTCTSSCACKNCKCTSC) form a beta region. Residues Cys5, Cys7, Cys13, Cys15, Cys19, Cys21, Cys24, Cys26, Cys29, Cys33, Cys34, Cys36, Cys37, Cys41, Cys44, Cys48, Cys50, Cys57, Cys59, and Cys60 each coordinate a divalent metal cation. The segment at 30 to 61 (KKSCCSCCPVGCSKCAQGCVCKGAADKCTCCA) is alpha.

The protein belongs to the metallothionein superfamily. Type 1 family.

Its function is as follows. Metallothioneins have a high content of cysteine residues that bind various heavy metals; these proteins are transcriptionally regulated by both heavy metals and glucocorticoids. The chain is Metallothionein-1 (Mt1) from Mus musculus (Mouse).